We begin with the raw amino-acid sequence, 401 residues long: MAFLSLFLCLVFSSPLMAMPPALQGRKAISPASILKGPSTDNGARDFHGRKFPHFMMQLYQNIISRRDKDLSNLEHPTLQESDTVQSFIAKSYTTVGNHWTLFFDMSSISTSNELKLAELRICLPSFGKSHSVTVEIYHTKDTKEKLFMGSFKTKISSALDADCKVFNLTMVLHNYLIRGKRLIKDEYIQAKGLLLRDLEKSAAEKGAENVDTLKQDKYHVSDFAAERIILVVFAKERSQAKPDPPSLGKQLFPLKYGMADNANKVNGFRRLRRNKKEKTRIDVGTTPPKPVEEIKPKCRKVDMFVDFQKIGWGSWIVYPKAYNAYRCESACAVPLNETDDATNYSYIKSLLPLSDTERRECPSCVPVKMRSMSMLYYENEDFVLRHHEEMIVEECGFKDI.

The first 18 residues, 1 to 18 (MAFLSLFLCLVFSSPLMA), serve as a signal peptide directing secretion. A propeptide spanning residues 19-274 (MPPALQGRKA…KVNGFRRLRR (256 aa)) is cleaved from the precursor. 3 N-linked (GlcNAc...) asparagine glycosylation sites follow: Asn168, Asn337, and Asn344. Cystine bridges form between Cys299-Cys365 and Cys328-Cys396.

This sequence belongs to the TGF-beta family. In terms of assembly, monomer. The propeptide region interacts with bmp4 in a non-covalent manner. Expressed in the dorsal marginal region of late blastula, becoming restricted to the Spemann organizer at the early gastrula stage.

Its subcellular location is the secreted. Exhibits mesoderm-dorsalizing activity and neural-inducing activity, but lacks mesoderm-inducing activity. Regulates the expression of specific mesodermal and neural genes. Induces convergent extension movements at the embryonic midline by activating the fgf signaling pathway to induce t/bra expression in the organizer region. Acts with wnt11 to induce Spemann organizer cells and induce axis formation. The unprocessed protein antagonizes bmp-signaling. This chain is Nodal homolog 3-A, found in Xenopus tropicalis (Western clawed frog).